A 185-amino-acid polypeptide reads, in one-letter code: Elongation factor P (185 aa).

This sequence belongs to the elongation factor P family.

It is found in the cytoplasm. It functions in the pathway protein biosynthesis; polypeptide chain elongation. Its function is as follows. Involved in peptide bond synthesis. Stimulates efficient translation and peptide-bond synthesis on native or reconstituted 70S ribosomes in vitro. Probably functions indirectly by altering the affinity of the ribosome for aminoacyl-tRNA, thus increasing their reactivity as acceptors for peptidyl transferase. This Bacillus cereus (strain G9842) protein is Elongation factor P.